Consider the following 221-residue polypeptide: Deoxyribose-phosphate aldolase 1 (221 aa).

D89 functions as the Proton donor/acceptor in the catalytic mechanism. K152 (schiff-base intermediate with acetaldehyde) is an active-site residue. Catalysis depends on K181, which acts as the Proton donor/acceptor.

Belongs to the DeoC/FbaB aldolase family. DeoC type 1 subfamily.

It is found in the cytoplasm. It carries out the reaction 2-deoxy-D-ribose 5-phosphate = D-glyceraldehyde 3-phosphate + acetaldehyde. Its pathway is carbohydrate degradation; 2-deoxy-D-ribose 1-phosphate degradation; D-glyceraldehyde 3-phosphate and acetaldehyde from 2-deoxy-alpha-D-ribose 1-phosphate: step 2/2. Functionally, catalyzes a reversible aldol reaction between acetaldehyde and D-glyceraldehyde 3-phosphate to generate 2-deoxy-D-ribose 5-phosphate. In Oceanobacillus iheyensis (strain DSM 14371 / CIP 107618 / JCM 11309 / KCTC 3954 / HTE831), this protein is Deoxyribose-phosphate aldolase 1.